A 369-amino-acid chain; its full sequence is UDP-3-O-acylglucosamine N-acyltransferase (369 aa).

The active-site Proton acceptor is the His252. A disordered region spans residues 348–369; it reads ERRQRGENNAPAQNKQDEEKSS.

This sequence belongs to the transferase hexapeptide repeat family. LpxD subfamily. In terms of assembly, homotrimer.

The enzyme catalyses a UDP-3-O-[(3R)-3-hydroxyacyl]-alpha-D-glucosamine + a (3R)-hydroxyacyl-[ACP] = a UDP-2-N,3-O-bis[(3R)-3-hydroxyacyl]-alpha-D-glucosamine + holo-[ACP] + H(+). It participates in bacterial outer membrane biogenesis; LPS lipid A biosynthesis. In terms of biological role, catalyzes the N-acylation of UDP-3-O-acylglucosamine using 3-hydroxyacyl-ACP as the acyl donor. Is involved in the biosynthesis of lipid A, a phosphorylated glycolipid that anchors the lipopolysaccharide to the outer membrane of the cell. This Cupriavidus metallidurans (strain ATCC 43123 / DSM 2839 / NBRC 102507 / CH34) (Ralstonia metallidurans) protein is UDP-3-O-acylglucosamine N-acyltransferase.